Here is a 734-residue protein sequence, read N- to C-terminus: Photosystem I P700 chlorophyll a apoprotein A2 (734 aa).

The next 8 helical transmembrane spans lie at 46–69, 135–158, 175–199, 273–291, 330–353, 369–395, 417–439, and 517–535; these read IFSSHFGHIAIIFLWTSGNLFHVA, LYNGSLFLLILSAIMLFAGWLHLQ, LNHHLSGLFGLSSLAWTGHLIHVAI, MAHHHLAIAIVFIIAGHMY, LHMQLGLALASLGVITSLVAQHMY, AALYTHHQYIAGFLMVGAFAHGAIFFI, AIISHLSWVSLFLGFHTLGLYIH, and FLVHHAIALGLHTTTLILV. Cys-559 and Cys-568 together coordinate [4Fe-4S] cluster. The next 2 membrane-spanning stretches (helical) occupy residues 575–596 and 643–665; these read AFYLSVFWMLNTIGWVTFYWHW and LSVWAWMFLFGHLVWATGFMFLI. Positions 654, 662, and 670 each coordinate chlorophyll a. Trp-671 is a phylloquinone binding site. The chain crosses the membrane as a helical span at residues 707 to 727; that stretch reads LVGLVHFSVGYILTYAAFVIA.

This sequence belongs to the PsaA/PsaB family. The PsaA/B heterodimer binds the P700 chlorophyll special pair and subsequent electron acceptors. PSI consists of a core antenna complex that captures photons, and an electron transfer chain that converts photonic excitation into a charge separation. The eukaryotic PSI reaction center is composed of at least 11 subunits. Requires P700 is a chlorophyll a/chlorophyll a' dimer, A0 is one or more chlorophyll a, A1 is one or both phylloquinones and FX is a shared 4Fe-4S iron-sulfur center. as cofactor.

The protein resides in the plastid. It localises to the chloroplast thylakoid membrane. The enzyme catalyses reduced [plastocyanin] + hnu + oxidized [2Fe-2S]-[ferredoxin] = oxidized [plastocyanin] + reduced [2Fe-2S]-[ferredoxin]. In terms of biological role, psaA and PsaB bind P700, the primary electron donor of photosystem I (PSI), as well as the electron acceptors A0, A1 and FX. PSI is a plastocyanin/cytochrome c6-ferredoxin oxidoreductase, converting photonic excitation into a charge separation, which transfers an electron from the donor P700 chlorophyll pair to the spectroscopically characterized acceptors A0, A1, FX, FA and FB in turn. Oxidized P700 is reduced on the lumenal side of the thylakoid membrane by plastocyanin or cytochrome c6. This chain is Photosystem I P700 chlorophyll a apoprotein A2, found in Gracilaria tenuistipitata var. liui (Red alga).